The chain runs to 179 residues: Putative endogenous retrovirus group FC1 Env polyprotein (179 aa).

The signal sequence occupies residues 1-22; that stretch reads MARPSPLCLLLLLTLLPPIVPS. The tract at residues 23–179 is truncated surface protein; sequence NSLLTEPPFR…SKLRIFRTYV (157 aa). Residue N69 is glycosylated (N-linked (GlcNAc...) asparagine).

The protein belongs to the gamma type-C retroviral envelope protein family. HERV class-I F(c)1 env subfamily.

The protein resides in the virion. Its function is as follows. Retroviral envelope proteins mediate receptor recognition and membrane fusion during early infection. Endogenous envelope proteins may have kept, lost or modified their original function during evolution. The polypeptide is Putative endogenous retrovirus group FC1 Env polyprotein (ERVFC1) (Gorilla gorilla gorilla (Western lowland gorilla)).